Consider the following 447-residue polypeptide: ATP-dependent protease ATPase subunit HslU (447 aa).

Residues I18, 60 to 65 (GVGKTE), D259, E325, and R397 each bind ATP.

It belongs to the ClpX chaperone family. HslU subfamily. In terms of assembly, a double ring-shaped homohexamer of HslV is capped on each side by a ring-shaped HslU homohexamer. The assembly of the HslU/HslV complex is dependent on binding of ATP.

The protein localises to the cytoplasm. ATPase subunit of a proteasome-like degradation complex; this subunit has chaperone activity. The binding of ATP and its subsequent hydrolysis by HslU are essential for unfolding of protein substrates subsequently hydrolyzed by HslV. HslU recognizes the N-terminal part of its protein substrates and unfolds these before they are guided to HslV for hydrolysis. The chain is ATP-dependent protease ATPase subunit HslU from Burkholderia ambifaria (strain ATCC BAA-244 / DSM 16087 / CCUG 44356 / LMG 19182 / AMMD) (Burkholderia cepacia (strain AMMD)).